The primary structure comprises 426 residues: Maintenance of mitochondrial morphology protein 1 (426 aa).

The Lumenal segment spans residues 1–100 (MTDSENESTE…KFSGWSFAQG (100 aa)). The helical transmembrane segment at 101–121 (FFVGQLSIVLLFIFFLKFFIF) threads the bilayer. At 122-426 (SDEPSKSKNP…NTREEKPTEL (305 aa)) the chain is on the cytoplasmic side. The region spanning 194-409 (PAESLDWFNV…EPRFQFVRLP (216 aa)) is the SMP-LTD domain.

It belongs to the MMM1 family. In terms of assembly, homodimer. Component of the ER-mitochondria encounter structure (ERMES) or MDM complex, composed of MMM1, MDM10, MDM12 and MDM34. An MMM1 homodimer associates with one molecule of MDM12 on each side in a pairwise head-to-tail manner, and the SMP-LTD domains of MMM1 and MDM12 generate a continuous hydrophobic tunnel for phospholipid trafficking.

The protein resides in the endoplasmic reticulum membrane. Component of the ERMES/MDM complex, which serves as a molecular tether to connect the endoplasmic reticulum (ER) and mitochondria. Components of this complex are involved in the control of mitochondrial shape and protein biogenesis, and function in nonvesicular lipid trafficking between the ER and mitochondria. The MDM12-MMM1 subcomplex functions in the major beta-barrel assembly pathway that is responsible for biogenesis of all outer membrane beta-barrel proteins, and acts in a late step after the SAM complex. The MDM10-MDM12-MMM1 subcomplex further acts in the TOM40-specific pathway after the action of the MDM12-MMM1 complex. Essential for establishing and maintaining the structure of mitochondria and maintenance of mtDNA nucleoids. This Saccharomyces cerevisiae (strain AWRI1631) (Baker's yeast) protein is Maintenance of mitochondrial morphology protein 1.